The primary structure comprises 467 residues: Uronate isomerase (467 aa).

This sequence belongs to the metallo-dependent hydrolases superfamily. Uronate isomerase family.

It carries out the reaction D-glucuronate = D-fructuronate. It catalyses the reaction aldehydo-D-galacturonate = keto-D-tagaturonate. It functions in the pathway carbohydrate metabolism; pentose and glucuronate interconversion. This Solibacter usitatus (strain Ellin6076) protein is Uronate isomerase.